Here is a 330-residue protein sequence, read N- to C-terminus: PDZ and LIM domain protein 4 (330 aa).

The 77-residue stretch at 8-84 (RGPSPWGFRL…QLLLSVSRAE (77 aa)) folds into the PDZ domain. Disordered regions lie at residues 106–152 (EPEP…SSSA) and 163–182 (LHIS…RNRN). A compositionally biased stretch (polar residues) spans 139-152 (QHPQPSRPHASSSA). In terms of domain architecture, LIM zinc-binding spans 255-305 (CTRCGNGIVGTIVKARDKLYHPECFMCDDCGLNLKQRGYFFIEEQLYCETH).

In terms of assembly, interacts (via LIM domain) with PTPN13. Interacts (via PDZ domain) with ACTN1.

Its subcellular location is the cytoplasm. It is found in the cytoskeleton. The protein resides in the cell projection. The protein localises to the dendritic spine. It localises to the early endosome membrane. Its subcellular location is the recycling endosome membrane. It is found in the nucleus. The protein resides in the perinuclear region. The protein localises to the lamellipodium. It localises to the synapse. Its subcellular location is the synaptosome. Its function is as follows. Suppresses SRC activation by recognizing and binding to active SRC and facilitating PTPN13-mediated dephosphorylation of SRC 'Tyr-419' leading to its inactivation. Inactivated SRC dissociates from this protein allowing the initiation of a new SRC inactivation cycle. Involved in reorganization of the actin cytoskeleton. In nonmuscle cells, binds to ACTN1 (alpha-actinin-1), increases the affinity of ACTN1 to F-actin (filamentous actin), and promotes formation of actin stress fibers. Involved in regulation of the synaptic AMPA receptor transport in dendritic spines of hippocampal pyramidal neurons directing the receptors toward an insertion at the postsynaptic membrane. Links endosomal surface-internalized GRIA1-containing AMPA receptors to the alpha-actinin/actin cytoskeleton. Increases AMPA receptor-mediated excitatory postsynaptic currents in neurons. The chain is PDZ and LIM domain protein 4 (PDLIM4) from Gallus gallus (Chicken).